Consider the following 375-residue polypeptide: ATAGQVIKCKAAVAWEAGKPLSLEEVEVAPPRAGEVRIKVVATGVCHTDAYTLSGSDPEGAFPVILGHEGAGLVESVGEGVTKFKAGDTVIPLYVPQCGECKFCKNPKTNLCQKIRVTQGRGLMPDNTSRFTCKGKQLFHFMGTSTFSEYTVVADISLANVDPKAPLDKVCLLGCGISTGYGAALNTAKVEPGSTCAVFGLGAVGLAAIMGCKVAGATRIIGVDINPEKFGKAAEFGATECLNPKDHARPVQEVLVEMTDGGVDYSFECIGNVEIMRSALEACHKGWGESVIIGVAGAGQEIATRPFQLVTGRVWKATAFGGWKSVESVPKLVEDYMNKKLKVDEFVTHTLPFDSINEGFDLMHAGKSIRCVLTF.

At Ala1 the chain carries N-acetylalanine. The Zn(2+) site is built by Cys46, His68, Cys98, Cys101, Cys104, Cys112, and Cys175.

The protein belongs to the zinc-containing alcohol dehydrogenase family. Class-III subfamily. Homodimer or heterodimer with L chain. Requires Zn(2+) as cofactor.

It localises to the cytoplasm. The catalysed reaction is a primary alcohol + NAD(+) = an aldehyde + NADH + H(+). The enzyme catalyses a secondary alcohol + NAD(+) = a ketone + NADH + H(+). It carries out the reaction S-(hydroxymethyl)glutathione + NADP(+) = S-formylglutathione + NADPH + H(+). It catalyses the reaction S-(hydroxymethyl)glutathione + NAD(+) = S-formylglutathione + NADH + H(+). Class-III ADH is remarkably ineffective in oxidizing ethanol, but it readily catalyzes the oxidation of long-chain primary alcohols and the oxidation of S-(hydroxymethyl) glutathione. This is Alcohol dehydrogenase class-3 chain H from Gadus morhua (Atlantic cod).